The sequence spans 400 residues: MTQFASPVLHSLLDTDAYKLHMQQAVFHHYYDVQVAAEFRCRGDDLLGIYADAIREQVDAMQHLRLQEDEFQWLSGLPFFKPDYLNWLREFRYNPAQVCVTNDNGKLNIRLTGPWREVIMWEVPLLAVISELVHHYRSPNAGVDQALDALESKLVDFTALTANLDMSRFHLMDFGTRRRFSREVQQAIVKRLQQESWFVGTSNYDLARRLALTPMGTQAHEWFQAHQQISPDLATSQRAALAAWLNEYPDQLGIALTDCITMDAFLRDFGIEFASRYQGLRHDSGDPVAWGEKAIAHYEKLGIDPLTKTLVFSDNLDLQKAVELYRHFASRVQLSFGIGTRLTCDIPQVKPLNIVIKLVECNGKPVAKLSDSPGKTICHDKAFVRALRKAFDLPQIRKAS.

His220 is subject to Phosphohistidine; by autocatalysis.

The protein belongs to the NAPRTase family. Transiently phosphorylated on a His residue during the reaction cycle. Phosphorylation strongly increases the affinity for substrates and increases the rate of nicotinate D-ribonucleotide production. Dephosphorylation regenerates the low-affinity form of the enzyme, leading to product release.

It catalyses the reaction nicotinate + 5-phospho-alpha-D-ribose 1-diphosphate + ATP + H2O = nicotinate beta-D-ribonucleotide + ADP + phosphate + diphosphate. Its pathway is cofactor biosynthesis; NAD(+) biosynthesis; nicotinate D-ribonucleotide from nicotinate: step 1/1. Its function is as follows. Catalyzes the synthesis of beta-nicotinate D-ribonucleotide from nicotinate and 5-phospho-D-ribose 1-phosphate at the expense of ATP. The chain is Nicotinate phosphoribosyltransferase from Salmonella schwarzengrund (strain CVM19633).